We begin with the raw amino-acid sequence, 352 residues long: Biotin synthase (352 aa).

Residues 44–262 (NRVQVSTLLS…LAVARILMPK (219 aa)) form the Radical SAM core domain. [4Fe-4S] cluster is bound by residues Cys59, Cys63, and Cys66. Positions 103, 134, 194, and 266 each coordinate [2Fe-2S] cluster.

Belongs to the radical SAM superfamily. Biotin synthase family. As to quaternary structure, homodimer. It depends on [4Fe-4S] cluster as a cofactor. [2Fe-2S] cluster serves as cofactor.

The catalysed reaction is (4R,5S)-dethiobiotin + (sulfur carrier)-SH + 2 reduced [2Fe-2S]-[ferredoxin] + 2 S-adenosyl-L-methionine = (sulfur carrier)-H + biotin + 2 5'-deoxyadenosine + 2 L-methionine + 2 oxidized [2Fe-2S]-[ferredoxin]. It functions in the pathway cofactor biosynthesis; biotin biosynthesis; biotin from 7,8-diaminononanoate: step 2/2. Functionally, catalyzes the conversion of dethiobiotin (DTB) to biotin by the insertion of a sulfur atom into dethiobiotin via a radical-based mechanism. This chain is Biotin synthase, found in Pseudomonas putida (strain GB-1).